The sequence spans 360 residues: MPAPAALRVRGSSSPRVALALGSGGARGYAHIGVIQALRERGYDIVGIAGSSMGAVVGGVHAAGRLDEFAHWAKSLTQRTILRLLDPSISAAGILRAEKILDAVRDIVGPVAIEQLPIPYTAVATDLLAGKSVWFQRGPLDAAIRASIAIPGVIAPHEVDGRLLADGGILDPLPMAPIAGVNADLTIAVSLNGSEAGPARDAEPNVTAEWLNRMVRSTSALFDVSAARSLLDRPTARAVLSRFGAAAAESDSWSQAPEIEQRPAGPPADREEAADTPGLPKMGSFEVMNRTIDIAQSALARHTLAGYPADLLIEVPRSTCRSLEFHRAVEVIAVGRALATQALEAFEIDDDESAAATIEG.

One can recognise a PNPLA domain in the interval 19 to 179; it reads LALGSGGARG…LDPLPMAPIA (161 aa). The short motif at 50-54 is the GXSXG element; that stretch reads GSSMG. Ser52 (nucleophile) is an active-site residue. The active-site Proton acceptor is the Asp166. The DGA/G motif lies at 166 to 168; it reads DGG. Residues 251 to 282 form a disordered region; the sequence is DSWSQAPEIEQRPAGPPADREEAADTPGLPKM.

The protein belongs to the NTE family.

This is an uncharacterized protein from Mycobacterium bovis (strain ATCC BAA-935 / AF2122/97).